The following is a 726-amino-acid chain: Long-chain-alcohol oxidase FAO4A (726 aa).

Residues Ile103–Phe119 form a helical membrane-spanning segment. Cys224 to Ala239 serves as a coordination point for FAD. His659 acts as the Proton acceptor in catalysis.

The protein belongs to the GMC oxidoreductase family.

It is found in the membrane. The catalysed reaction is a long-chain primary fatty alcohol + O2 = a long-chain fatty aldehyde + H2O2. Functionally, long-chain fatty alcohol oxidase involved in the omega-oxidation pathway of lipid degradation. The polypeptide is Long-chain-alcohol oxidase FAO4A (FAO4A) (Arabidopsis thaliana (Mouse-ear cress)).